Reading from the N-terminus, the 354-residue chain is 3-dehydroquinate synthase (354 aa).

Residues 100–104 (GATGD), 124–125 (TT), K136, K145, and 163–166 (FLKT) contribute to the NAD(+) site. E178, H242, and H256 together coordinate Zn(2+).

This sequence belongs to the sugar phosphate cyclases superfamily. Dehydroquinate synthase family. Requires NAD(+) as cofactor. It depends on Co(2+) as a cofactor. Zn(2+) serves as cofactor.

Its subcellular location is the cytoplasm. It catalyses the reaction 7-phospho-2-dehydro-3-deoxy-D-arabino-heptonate = 3-dehydroquinate + phosphate. The protein operates within metabolic intermediate biosynthesis; chorismate biosynthesis; chorismate from D-erythrose 4-phosphate and phosphoenolpyruvate: step 2/7. Its function is as follows. Catalyzes the conversion of 3-deoxy-D-arabino-heptulosonate 7-phosphate (DAHP) to dehydroquinate (DHQ). This chain is 3-dehydroquinate synthase, found in Staphylococcus aureus (strain Mu50 / ATCC 700699).